The chain runs to 568 residues: Lipoprotein LpqB (568 aa).

Positions 1-23 (MSKISTKLKALSAVLSVTTLVAG) are cleaved as a signal peptide. A lipid anchor (N-palmitoyl cysteine) is attached at Cys24. The S-diacylglycerol cysteine moiety is linked to residue Cys24.

It belongs to the LpqB lipoprotein family.

Its subcellular location is the cell membrane. This Corynebacterium glutamicum (strain R) protein is Lipoprotein LpqB.